A 335-amino-acid chain; its full sequence is Mycobacterial beta-ketoacyl-[acyl-carrier-protein] synthase III (335 aa).

Active-site residues include Cys122 and His258. The tract at residues 259 to 263 (QANSR) is ACP-binding. Asn289 is a catalytic residue.

Belongs to the thiolase-like superfamily. FabH family. In terms of assembly, homodimer.

The protein resides in the cytoplasm. It carries out the reaction malonyl-[ACP] + dodecanoyl-CoA + H(+) = 3-oxotetradecanoyl-[ACP] + CO2 + CoA. It functions in the pathway lipid metabolism; fatty acid biosynthesis. Its pathway is lipid metabolism; mycolic acid biosynthesis. Catalyzes the condensation reaction of fatty acid synthesis by the addition to an acyl acceptor of two carbons from malonyl-ACP. Catalyzes the first condensation reaction which initiates fatty acid synthesis and may therefore play a role in governing the total rate of fatty acid production. Possesses both acetoacetyl-ACP synthase and acetyl transacylase activities. Its substrate specificity determines the biosynthesis of branched-chain and/or straight-chain of fatty acids. The chain is Mycobacterial beta-ketoacyl-[acyl-carrier-protein] synthase III from Mycobacterium marinum (strain ATCC BAA-535 / M).